The primary structure comprises 446 residues: Divalent metal cation transporter MntH (446 aa).

Helical transmembrane passes span 32–52, 59–79, 107–127, 139–159, 168–188, 205–225, 264–284, 303–323, 355–375, 381–401, and 420–440; these read LAFLGPGLLVAVGYMDPGNWI, AQFGYTLLFVILISSLSAMLL, AIIFWVIAELAIIATDIAEVI, IPLIIGALITVFDVFLLLFIM, AIVGTLIFTVLMIFVFEVYIS, IIANHSILYIALGIIGATIMP, SIAFIVNCLLLVLGAALFYGV, PVLGVVMGSIMSTLFAIALLA, LVTRSLAVIPVLLCLVIFRGN, QLLVFSQVFLSIALPFSLIPL, and VNICAWGLIIILSFLNIYLII.

It belongs to the NRAMP family.

It localises to the cell membrane. H(+)-stimulated, divalent metal cation uptake system. The sequence is that of Divalent metal cation transporter MntH from Staphylococcus haemolyticus (strain JCSC1435).